The sequence spans 555 residues: Glutamine--tRNA ligase (555 aa).

A 'HIGH' region motif is present at residues 34 to 44 (PEPNGYLHIGH). ATP contacts are provided by residues 35 to 37 (EPN) and 41 to 47 (HIGHAKS). L-glutamine-binding residues include D67 and Y212. Residues T231, 261–262 (RL), and 269–271 (MSK) each bind ATP. A 'KMSKS' region motif is present at residues 268–272 (IMSKR).

This sequence belongs to the class-I aminoacyl-tRNA synthetase family. Monomer.

It is found in the cytoplasm. It catalyses the reaction tRNA(Gln) + L-glutamine + ATP = L-glutaminyl-tRNA(Gln) + AMP + diphosphate. This chain is Glutamine--tRNA ligase, found in Erwinia tasmaniensis (strain DSM 17950 / CFBP 7177 / CIP 109463 / NCPPB 4357 / Et1/99).